Here is a 348-residue protein sequence, read N- to C-terminus: MTIAPEGRRLLRVEARNSETPIETKPRWIRNQVKNGPEYQDMKERVAGASLHTVCQEAGCPNIHECWESREATFLIGGANCSRRCDFCMINSARPEPLDRGEPLRVAESVREMQLNYSTITGVTRDDLDDEGAWLYSEVVRKIHELNPHTGVENLVPDFSGKKDLLQEVFESRPEVFAHNVETVPRIFKRIRPAFRYERSLDVIRQARDFGLVTKSNLILGMGETKEEITEALQDLHDAGCDIITITQYLRPGPLFHPIERWVKPEEFLEHADAAKEMGFAAVMSGPLVRSSYRAGRLYAQAMEFRGEEIPAHLAHLKDTSGGSTAQEASTLLERYGASEDTPVVSFN.

[4Fe-4S] cluster-binding residues include Cys-55, Cys-60, Cys-66, Cys-81, Cys-85, Cys-88, and Ser-292. In terms of domain architecture, Radical SAM core spans 67-281 (WESREATFLI…ADAAKEMGFA (215 aa)).

Belongs to the radical SAM superfamily. Lipoyl synthase family. [4Fe-4S] cluster is required as a cofactor.

It localises to the cytoplasm. It carries out the reaction [[Fe-S] cluster scaffold protein carrying a second [4Fe-4S](2+) cluster] + N(6)-octanoyl-L-lysyl-[protein] + 2 oxidized [2Fe-2S]-[ferredoxin] + 2 S-adenosyl-L-methionine + 4 H(+) = [[Fe-S] cluster scaffold protein] + N(6)-[(R)-dihydrolipoyl]-L-lysyl-[protein] + 4 Fe(3+) + 2 hydrogen sulfide + 2 5'-deoxyadenosine + 2 L-methionine + 2 reduced [2Fe-2S]-[ferredoxin]. Its pathway is protein modification; protein lipoylation via endogenous pathway; protein N(6)-(lipoyl)lysine from octanoyl-[acyl-carrier-protein]: step 2/2. Catalyzes the radical-mediated insertion of two sulfur atoms into the C-6 and C-8 positions of the octanoyl moiety bound to the lipoyl domains of lipoate-dependent enzymes, thereby converting the octanoylated domains into lipoylated derivatives. In Corynebacterium glutamicum (strain R), this protein is Lipoyl synthase.